The following is a 249-amino-acid chain: 23S rRNA (guanosine-2'-O-)-methyltransferase RlmB (249 aa).

S-adenosyl-L-methionine-binding residues include G197, I217, and L226.

The protein belongs to the class IV-like SAM-binding methyltransferase superfamily. RNA methyltransferase TrmH family. RlmB subfamily.

It localises to the cytoplasm. It catalyses the reaction guanosine(2251) in 23S rRNA + S-adenosyl-L-methionine = 2'-O-methylguanosine(2251) in 23S rRNA + S-adenosyl-L-homocysteine + H(+). Specifically methylates the ribose of guanosine 2251 in 23S rRNA. This chain is 23S rRNA (guanosine-2'-O-)-methyltransferase RlmB, found in Ralstonia nicotianae (strain ATCC BAA-1114 / GMI1000) (Ralstonia solanacearum).